The primary structure comprises 124 residues: Small ribosomal subunit protein uS13 (124 aa).

The disordered stretch occupies residues 99 to 124 (RGQRTRTNARTRKGPRKTVGVMRKKS). Positions 101-124 (QRTRTNARTRKGPRKTVGVMRKKS) are enriched in basic residues.

It belongs to the universal ribosomal protein uS13 family. Part of the 30S ribosomal subunit. Forms a loose heterodimer with protein S19. Forms two bridges to the 50S subunit in the 70S ribosome.

Located at the top of the head of the 30S subunit, it contacts several helices of the 16S rRNA. In the 70S ribosome it contacts the 23S rRNA (bridge B1a) and protein L5 of the 50S subunit (bridge B1b), connecting the 2 subunits; these bridges are implicated in subunit movement. Contacts the tRNAs in the A and P-sites. The sequence is that of Small ribosomal subunit protein uS13 from Caldicellulosiruptor saccharolyticus (strain ATCC 43494 / DSM 8903 / Tp8T 6331).